Here is a 170-residue protein sequence, read N- to C-terminus: UPF0316 protein CLJ_B0679 (170 aa).

The next 2 helical transmembrane spans lie at M1 to I21 and I36 to I56.

This sequence belongs to the UPF0316 family.

Its subcellular location is the cell membrane. This Clostridium botulinum (strain 657 / Type Ba4) protein is UPF0316 protein CLJ_B0679.